We begin with the raw amino-acid sequence, 144 residues long: Probable disulfide formation protein (144 aa).

The helical transmembrane segment at 10–29 (WNLLLLTWLVALISTLSALF) threads the bilayer. C39 and C42 are joined by a disulfide. 2 consecutive transmembrane segments (helical) span residues 44–63 (FQRA…CYRS) and 70–87 (YALP…VHTL). Residues C100 and C107 are joined by a disulfide bond. A helical transmembrane segment spans residues 116–138 (GVVPLPALALFAFIIIAILLIII).

Belongs to the DsbB family. BdbC subfamily.

Its subcellular location is the cell inner membrane. Functionally, required for disulfide bond formation in some proteins. This is Probable disulfide formation protein from Metapseudomonas resinovorans (Pseudomonas resinovorans).